A 293-amino-acid chain; its full sequence is MMRIALFLLTNLAVMLVFGLVLSLTGIQSSSVQGLMIMAGLFGFGGAFVSLLMSKWMALRSVGGEVIERPRNETEYWLLETVRRQSQQVGIAMPQVAIYQAPDINAFATGARRDASLVAVSTGLLQNMSRDEAEAVIAHEISHVANGDMVTMTLIQGVVNTFVIFISRLIAQIAAGFLSGDRDGESNSPGNPMVYFAVSMVLELVFGILASIITMWFSRHREFHADAGSAKLVGREKMIAALQRLKTSYEPQEAGSMMAFCINGKSKTFSELFMSHPPLDKRIEALRSGQYLK.

Transmembrane regions (helical) follow at residues 4–24 and 34–54; these read IALF…VLSL and GLMI…LLMS. His139 lines the Zn(2+) pocket. Glu140 is a catalytic residue. His143 provides a ligand contact to Zn(2+). Transmembrane regions (helical) follow at residues 158–178 and 193–213; these read VVNT…AGFL and MVYF…ASII. Glu222 lines the Zn(2+) pocket.

It belongs to the peptidase M48B family. The cofactor is Zn(2+).

It is found in the cell inner membrane. This chain is Protease HtpX, found in Yersinia pseudotuberculosis serotype O:1b (strain IP 31758).